We begin with the raw amino-acid sequence, 371 residues long: MSLENKNIIITAGGTGGHIYPALAIAELLRQNKANVTWVGTPNNMEASIVPEYFNIQFIKSSGVRRKGIIKKITFPLKLAYNTLKSRSLLKKLKADLVIGFGGYVSGPICLAAAQINIPVIIHEQNAKIGLTNRILAKFATTICLAFEIENLHKQFSSKQLAKTKIVGNPVRKEIVALNDKARIYTDSSTLKILVLGGSQGAKAINEIIPKLIQKSNEQGINIKVWHQTGKLSLEETKDAYKDISQNHIKDIAAFIDDMAIAYNWADLVICRAGALTVSECAIAGLPAIFIPLPSAVDDHQFFNAQNIVNNNAGFCLRQQQMTLENLLAIIKPLNQDRSKLEQMSKMAKKTLIKNSSEQILDCVKKILNNK.

Residues 15 to 17 (TGG), Asn-126, Arg-172, Ser-199, Ile-256, 275 to 280 (ALTVSE), and Gln-301 contribute to the UDP-N-acetyl-alpha-D-glucosamine site.

This sequence belongs to the glycosyltransferase 28 family. MurG subfamily.

The protein localises to the cell inner membrane. It carries out the reaction di-trans,octa-cis-undecaprenyl diphospho-N-acetyl-alpha-D-muramoyl-L-alanyl-D-glutamyl-meso-2,6-diaminopimeloyl-D-alanyl-D-alanine + UDP-N-acetyl-alpha-D-glucosamine = di-trans,octa-cis-undecaprenyl diphospho-[N-acetyl-alpha-D-glucosaminyl-(1-&gt;4)]-N-acetyl-alpha-D-muramoyl-L-alanyl-D-glutamyl-meso-2,6-diaminopimeloyl-D-alanyl-D-alanine + UDP + H(+). Its pathway is cell wall biogenesis; peptidoglycan biosynthesis. Cell wall formation. Catalyzes the transfer of a GlcNAc subunit on undecaprenyl-pyrophosphoryl-MurNAc-pentapeptide (lipid intermediate I) to form undecaprenyl-pyrophosphoryl-MurNAc-(pentapeptide)GlcNAc (lipid intermediate II). This Francisella tularensis subsp. tularensis (strain FSC 198) protein is UDP-N-acetylglucosamine--N-acetylmuramyl-(pentapeptide) pyrophosphoryl-undecaprenol N-acetylglucosamine transferase.